A 392-amino-acid polypeptide reads, in one-letter code: Mitochondrial distribution and morphology protein 10 (392 aa).

It belongs to the MDM10 family. In terms of assembly, component of the ER-mitochondria encounter structure (ERMES) or MDM complex, composed of MMM1, MDM10, MDM12 and MDM34. Associates with the mitochondrial outer membrane sorting assembly machinery SAM(core) complex.

Its subcellular location is the mitochondrion outer membrane. In terms of biological role, component of the ERMES/MDM complex, which serves as a molecular tether to connect the endoplasmic reticulum and mitochondria. Components of this complex are involved in the control of mitochondrial shape and protein biogenesis and may function in phospholipid exchange. MDM10 is involved in the late assembly steps of the general translocase of the mitochondrial outer membrane (TOM complex). Functions in the TOM40-specific route of the assembly of outer membrane beta-barrel proteins, including the association of TOM40 with the receptor TOM22 and small TOM proteins. Can associate with the SAM(core) complex as well as the MDM12-MMM1 complex, both involved in late steps of the major beta-barrel assembly pathway, that is responsible for biogenesis of all outer membrane beta-barrel proteins. May act as a switch that shuttles between both complexes and channels precursor proteins into the TOM40-specific pathway. Plays a role in mitochondrial morphology and in the inheritance of mitochondria. In Phaeosphaeria nodorum (strain SN15 / ATCC MYA-4574 / FGSC 10173) (Glume blotch fungus), this protein is Mitochondrial distribution and morphology protein 10.